Consider the following 375-residue polypeptide: Pectate lyase C (375 aa).

The N-terminal stretch at 1–22 (MKSLITPITAGLLLALSQPLLA) is a signal peptide. A disulfide bridge links Cys94 with Cys177. 4 residues coordinate Ca(2+): Asp151, Asp153, Glu188, and Asp192. The active site involves Arg240. Cys351 and Cys374 form a disulfide bridge.

Belongs to the polysaccharide lyase 1 family. PLADES subfamily. It depends on Ca(2+) as a cofactor.

The protein localises to the secreted. The catalysed reaction is Eliminative cleavage of (1-&gt;4)-alpha-D-galacturonan to give oligosaccharides with 4-deoxy-alpha-D-galact-4-enuronosyl groups at their non-reducing ends.. The protein operates within glycan metabolism; pectin degradation; 2-dehydro-3-deoxy-D-gluconate from pectin: step 2/5. In terms of biological role, involved in maceration and soft-rotting of plant tissue. The chain is Pectate lyase C from Dickeya chrysanthemi (Pectobacterium chrysanthemi).